The following is a 219-amino-acid chain: Thiamine-phosphate synthase (219 aa).

4-amino-2-methyl-5-(diphosphooxymethyl)pyrimidine contacts are provided by residues 44–48 (QFREK) and N79. D80 and D99 together coordinate Mg(2+). S117 contacts 4-amino-2-methyl-5-(diphosphooxymethyl)pyrimidine. Residue 143 to 145 (TST) coordinates 2-[(2R,5Z)-2-carboxy-4-methylthiazol-5(2H)-ylidene]ethyl phosphate. K146 contacts 4-amino-2-methyl-5-(diphosphooxymethyl)pyrimidine. 2-[(2R,5Z)-2-carboxy-4-methylthiazol-5(2H)-ylidene]ethyl phosphate is bound by residues G175 and 195-196 (IS).

The protein belongs to the thiamine-phosphate synthase family. It depends on Mg(2+) as a cofactor.

The catalysed reaction is 2-[(2R,5Z)-2-carboxy-4-methylthiazol-5(2H)-ylidene]ethyl phosphate + 4-amino-2-methyl-5-(diphosphooxymethyl)pyrimidine + 2 H(+) = thiamine phosphate + CO2 + diphosphate. The enzyme catalyses 2-(2-carboxy-4-methylthiazol-5-yl)ethyl phosphate + 4-amino-2-methyl-5-(diphosphooxymethyl)pyrimidine + 2 H(+) = thiamine phosphate + CO2 + diphosphate. It carries out the reaction 4-methyl-5-(2-phosphooxyethyl)-thiazole + 4-amino-2-methyl-5-(diphosphooxymethyl)pyrimidine + H(+) = thiamine phosphate + diphosphate. Its pathway is cofactor biosynthesis; thiamine diphosphate biosynthesis; thiamine phosphate from 4-amino-2-methyl-5-diphosphomethylpyrimidine and 4-methyl-5-(2-phosphoethyl)-thiazole: step 1/1. Its function is as follows. Condenses 4-methyl-5-(beta-hydroxyethyl)thiazole monophosphate (THZ-P) and 2-methyl-4-amino-5-hydroxymethyl pyrimidine pyrophosphate (HMP-PP) to form thiamine monophosphate (TMP). This chain is Thiamine-phosphate synthase, found in Bacillus cereus (strain AH820).